The sequence spans 557 residues: Nucleolin 1 (557 aa).

3 disordered regions span residues 1-297 (MGKS…GGSK), 376-398 (GERG…GDGG), and 474-557 (LVVD…FGDE). The span at 49-63 (QKEKAVKKVPKKVES) shows a compositional bias: basic and acidic residues. Composition is skewed to acidic residues over residues 64–74 (SDDSDSESEEE), 91–101 (ESSDDSSSDDE), and 124–135 (SSSDDDSSDEEV). Low complexity predominate over residues 174 to 184 (AKIAKPAAKDS). Residues 186-197 (SSDDDSDEDSED) are compositionally biased toward acidic residues. Low complexity predominate over residues 203–217 (KKAAPAAAKAASSSD). Residues 218-229 (SSDEDSDEESED) are compositionally biased toward acidic residues. The span at 230–247 (EKPAQKKADTKASKKSSS) shows a compositional bias: basic and acidic residues. Acidic residues predominate over residues 249-263 (ESSESEEDESEDEEE). Residues 264 to 281 (TPKKKSSDVEMVDAEKSS) show a composition bias toward basic and acidic residues. In terms of domain architecture, RRM 1 spans 297 to 374 (KTLFAANLSF…REIRLDIAQE (78 aa)). One can recognise an RRM 2 domain in the interval 401–481 (KKIFVKGFDA…FYLVVDEPRP (81 aa)). Positions 485–503 (SSGGGGFGRGNGRFGSGGG) are enriched in gly residues.

Interacts with THAL in the nucleus. In terms of tissue distribution, expressed in roots, leaves, shoots and flowers.

The protein resides in the nucleus. It is found in the nucleolus. Involved in pre-rRNA processing and ribosome assembly. Is associated with intranucleolar chromatin and pre-ribosomal particles and plays a role in controlling activation and repression of a specific subset of rRNA genes located in distinctive nucleolar organizer regions. Binds specifically rDNA chromatin and may be required to maintain rDNA chromatin structure, but is probably not required for the overall histone methylation status of 45S rRNA genes. Involved in leaf polarity establishment by functioning cooperatively with AS1 to repress abaxial genes ARF3, ARF4, KAN1, KAN2, YAB1 and YAB5, and the knox homeobox genes KNAT1, KNAT2, KNAT6, and STM to promote adaxial development in leaf primordia at shoot apical meristems at high temperatures. The chain is Nucleolin 1 from Arabidopsis thaliana (Mouse-ear cress).